The chain runs to 1166 residues: Myosin-1 (1166 aa).

Residues 1–13 (MSQKVTPFMQSLK) are compositionally biased toward polar residues. The interval 1–71 (MSQKVTPFMQ…AGDSEDSPYS (71 aa)) is disordered. S14 carries the phosphoserine modification. The span at 32-45 (NSSGASVRLTNSNV) shows a compositional bias: polar residues. Positions 112-161 (KKILQSWIQLPNGNWELGKILSTSGEESVISLPEGKVIKVISETLVPANP) constitute a Myosin N-terminal SH3-like domain. A Myosin motor domain is found at 165-837 (DGVDDLMQLS…QIGVLEDTRN (673 aa)). ATP-binding positions include 256-263 (GESGAGKT) and 304-312 (NDNSSRFGK). Actin-binding regions lie at residues 589-623 (LFEK…KQHL) and 717-739 (LFQL…KPNN). IQ domains lie at 839–868 (TLHG…GISI), 862–891 (LKRG…RHKA), 888–917 (RHKA…ASVV), and 911–940 (IADA…LKSG). The stretch at 955–1005 (SVLSELQRRVLKAEAALREKEEENDILQQRLQQYENRWSEYETKMKSMEEI) forms a coiled coil. Residues 1030–1065 (ARNSDASVNASDATDWDSSSNQFRSQTSNGVGSRLQ) are disordered. Positions 1032–1060 (NSDASVNASDATDWDSSSNQFRSQTSNGV) are enriched in polar residues.

Belongs to the TRAFAC class myosin-kinesin ATPase superfamily. Myosin family. Plant myosin class VIII subfamily. In terms of assembly, homodimer.

It is found in the cell junction. Its subcellular location is the plasmodesma. The protein resides in the cytoplasm. The protein localises to the cytoskeleton. It localises to the phragmoplast. It is found in the endosome. Its subcellular location is the endoplasmic reticulum. Its function is as follows. Myosin heavy chain that is required for the cell cycle-regulated transport of various organelles and proteins for their segregation. Functions by binding with its tail domain to receptor proteins on organelles and exerting force with its N-terminal motor domain against actin filaments, thereby transporting its cargo along polarized actin cables. Involved in endocytosis via its action in endosomal trafficking. The sequence is that of Myosin-1 (VIII-1) from Arabidopsis thaliana (Mouse-ear cress).